The following is a 679-amino-acid chain: MTQDLERARERAEELRREIEHHNYLYYVLDRPAITDAQYDRLMRELERLEKQFPALVTPYSPTQRVGGRPREGFAAVRHLSPMLSLANAFDERELRDFDRRVRQALPGEQVRYVVELKIDGLAVSLYYENGILVRGATRGDGDTGEDITENLKTVRSVPLRLRRPVPALEVRGEAFMPKEAFSRLNEGREEAGETLFANPRNAAAGSLRQLDPKITASRQLDLFVYGTGYGEWGRAVFPDGERTAPQEHAEVLELLKELGFKVNPEYRLFDRLDELVEYCLGWQARRFELPYAVDGLVIKVNSLAQQERLGATMKSPRWAVAYKFPPEQAVTKVKDIFVRVGRTGVLTPTAELEPVRLAGTTVSRATLHNEDIIREKDIRIGDKVLVQKAGDIIPEVVAVLKEERTGAEKAWAMPGRCPSCGAGVVRAEGEAAVRCTNMACPARLQEGLIHFASRDAMDIAGLGPAVIAQLVSAGLVGDPADLYALRYEDLVPLERLGPKSARNLLEAIEASKGRSLARLIFALGIRHVGERAAKILANHYQSLSGLMSATQEELVNIPEIGPKIAASIVEFFSNEQNRKVIDKLVKAGVNTLTEKVIREGGGPLNGKVFVLTGVLKDFSRQQAQELIESLGGRISSSVSRNTDFVVAGENPGSKYEKALTLGVKILDENEFRELTGRK.

Residues 36–40, 85–86, and glutamate 116 each bind NAD(+); these read DAQYD and SL. Catalysis depends on lysine 118, which acts as the N6-AMP-lysine intermediate. The NAD(+) site is built by arginine 139, glutamate 174, lysine 300, and lysine 324. Residues cysteine 418, cysteine 421, cysteine 436, and cysteine 441 each coordinate Zn(2+). Residues 600–679 enclose the BRCT domain; sequence EGGGPLNGKV…NEFRELTGRK (80 aa).

It belongs to the NAD-dependent DNA ligase family. LigA subfamily. Mg(2+) is required as a cofactor. Mn(2+) serves as cofactor.

It carries out the reaction NAD(+) + (deoxyribonucleotide)n-3'-hydroxyl + 5'-phospho-(deoxyribonucleotide)m = (deoxyribonucleotide)n+m + AMP + beta-nicotinamide D-nucleotide.. Its function is as follows. DNA ligase that catalyzes the formation of phosphodiester linkages between 5'-phosphoryl and 3'-hydroxyl groups in double-stranded DNA using NAD as a coenzyme and as the energy source for the reaction. It is essential for DNA replication and repair of damaged DNA. This is DNA ligase from Pelotomaculum thermopropionicum (strain DSM 13744 / JCM 10971 / SI).